A 278-amino-acid chain; its full sequence is Small ribosomal subunit protein uS2 (278 aa).

Positions Ala235 to Glu278 are disordered. Positions Val252–Asp261 are enriched in basic and acidic residues.

This sequence belongs to the universal ribosomal protein uS2 family.

This Parabacteroides distasonis (strain ATCC 8503 / DSM 20701 / CIP 104284 / JCM 5825 / NCTC 11152) protein is Small ribosomal subunit protein uS2.